Here is a 405-residue protein sequence, read N- to C-terminus: Glucose-1-phosphate adenylyltransferase (405 aa).

Alpha-D-glucose 1-phosphate-binding positions include Tyr-99, Gly-164, 179–180 (EK), and Ser-197.

Belongs to the bacterial/plant glucose-1-phosphate adenylyltransferase family. In terms of assembly, homotetramer.

The enzyme catalyses alpha-D-glucose 1-phosphate + ATP + H(+) = ADP-alpha-D-glucose + diphosphate. Its pathway is glycan biosynthesis; glycogen biosynthesis. Functionally, involved in the biosynthesis of ADP-glucose, a building block required for the elongation reactions to produce glycogen. Catalyzes the reaction between ATP and alpha-D-glucose 1-phosphate (G1P) to produce pyrophosphate and ADP-Glc. This Corynebacterium aurimucosum (strain ATCC 700975 / DSM 44827 / CIP 107346 / CN-1) (Corynebacterium nigricans) protein is Glucose-1-phosphate adenylyltransferase.